A 555-amino-acid chain; its full sequence is MGEDVIDSLQLNELLNAGEYKIGELTFQSIRSSQELQKKNTIVNLFGIVKDFTPSRQSLHGTKDWVTTVYLWDPTCDTSSIGLQIHLFSKQGNDLPVIKQVGQPLLLHQITLRSYRDRTQGLSKDQFRYALWPDFSSNSKDTLCPQPMPRLMKTGDKEEQFALLLNKIWDEQTNKHKNGELLSTSSARQNQTGLSYPSVSFSLLSQITPHQRCSFYAQVIKTWYSDKNFTLYVTDYTENELFFPMSPYTSSSRWRGPFGRFSIRCILWDEHDFYCRNYIKEGDYVVMKNVRTKIDHLGYLECILHGDSAKRYNMSIEKVDSEEPELNEIKSRKRLYVQNCQNGIEAVIEKLSQSQQSENPFIAHELKQTSVNEITAHVINEPASLKLTTISTILHAPLQNLLKPRKHRLRVQVVDFWPKSLTQFAVLSQPPSSYVWMFALLVRDVSNVTLPVIFFDSDAAELINSSKIQPCNLADHPQMTLQLKERLFLIWGNLEERIQHHISKGESPTLAAEDVETPWFDIYVKEYIPVIGNTKDHQSLTFLQKRWRGFGTKIV.

The protein belongs to the telombin family. In terms of assembly, self-associates. Interacts with ccq1, poz1 and tpz1.

It is found in the nucleus. It localises to the chromosome. The protein localises to the telomere. Its function is as follows. Single-stranded telomeric DNA-binding protein that is required to protect the 3'-end telomeric overhang. It binds the consensus sequence 5'-GGTTAC-3'. Regulates telomerase and telomere length. The protein is Protection of telomeres protein 1 (pot1) of Schizosaccharomyces pombe (strain 972 / ATCC 24843) (Fission yeast).